The sequence spans 209 residues: MKRQHLTARQQEIFEFVKNHIESTGMPPTRVEIAREIGFKSPNAAEEHLKALARKGYIEMLSGTSRGIRILVEDEAANDEEGLPLIGKVAAGTPIEAIEHIEKHYPVNGAMFSPAADYLLKVNGNSMEKIGILDGDLLAVHKTKSVRNGQVVVARVDDEVTVKRLEKKGDLIYLHPENDELEPIVVDPRQSYIEIEGIAVGVIRSNAWM.

The segment at residues 30 to 50 is a DNA-binding region (H-T-H motif); it reads RVEIAREIGFKSPNAAEEHLK. Catalysis depends on for autocatalytic cleavage activity residues S126 and K163.

This sequence belongs to the peptidase S24 family. As to quaternary structure, homodimer.

The enzyme catalyses Hydrolysis of Ala-|-Gly bond in repressor LexA.. Functionally, represses a number of genes involved in the response to DNA damage (SOS response), including recA and lexA. In the presence of single-stranded DNA, RecA interacts with LexA causing an autocatalytic cleavage which disrupts the DNA-binding part of LexA, leading to derepression of the SOS regulon and eventually DNA repair. The protein is LexA repressor of Glaesserella parasuis serovar 5 (strain SH0165) (Haemophilus parasuis).